The primary structure comprises 206 residues: Dephospho-CoA kinase (206 aa).

The DPCK domain maps to 4–200 (IVALTGGIGS…AYYLQLASQF (197 aa)). 12-17 (GSGKST) is an ATP binding site.

This sequence belongs to the CoaE family.

It is found in the cytoplasm. It catalyses the reaction 3'-dephospho-CoA + ATP = ADP + CoA + H(+). The protein operates within cofactor biosynthesis; coenzyme A biosynthesis; CoA from (R)-pantothenate: step 5/5. In terms of biological role, catalyzes the phosphorylation of the 3'-hydroxyl group of dephosphocoenzyme A to form coenzyme A. This is Dephospho-CoA kinase from Escherichia coli O6:H1 (strain CFT073 / ATCC 700928 / UPEC).